We begin with the raw amino-acid sequence, 232 residues long: Vesicle transport through interaction with t-SNAREs homolog 1B (232 aa).

A2 is subject to N-acetylalanine. 2 interaction with CLINT1 regions span residues 2 to 23 and 69 to 73; these read ASSA…GLHE and APLSF. Over 2-208 the chain is Cytoplasmic; that stretch reads ASSAASSEHF…SRKVTTNKLL (207 aa). Residues 35–98 adopt a coiled-coil conformation; the sequence is TAGTEEKKKL…AKLHREVRST (64 aa). At T103 the chain carries Phosphothreonine. The residue at position 107 (R107) is an Omega-N-methylarginine. S138 carries the phosphoserine modification. The stretch at 161–198 forms a coiled coil; that stretch reads SEIIEELGEQRDQLERTKSRLVNTSENLSKSRKILRSM. Residues 209 to 229 traverse the membrane as a helical; Anchor for type IV membrane protein segment; it reads LSIIILLELAILGGLVYYKFF. Topologically, residues 230-232 are vesicular; sequence RSH.

The protein belongs to the VTI1 family. In terms of assembly, forms a SNARE complex with STX7, STX8 and VAMP8 which functions in the homotypic fusion of late endosomes. Component of the SNARE complex composed of STX7, STX8, VAMP7 and VIT1B that is required for heterotypic fusion of late endosomes with lysosomes. May interact with STX17. Interacts with CLINT1. Expressed in all tissues examined.

Its subcellular location is the early endosome membrane. The protein localises to the late endosome membrane. The protein resides in the lysosome membrane. It is found in the cytoplasmic granule. It localises to the recycling endosome membrane. V-SNARE that mediates vesicle transport pathways through interactions with t-SNAREs on the target membrane. These interactions are proposed to mediate aspects of the specificity of vesicle trafficking and to promote fusion of the lipid bilayers. May be concerned with increased secretion of cytokines associated with cellular senescence. This Homo sapiens (Human) protein is Vesicle transport through interaction with t-SNAREs homolog 1B (VTI1B).